The primary structure comprises 346 residues: D-amino-acid oxidase (346 aa).

9 residues coordinate FAD: Gly-22, Ile-24, Thr-52, Thr-53, Ser-54, Ala-58, Ala-59, Leu-60, and Thr-187. Tyr-227 and Arg-284 together coordinate D-proline. Residues Tyr-227 and Arg-284 each contribute to the D-serine site. Positions 284, 311, 312, 314, and 316 each coordinate FAD. Arg-284 contributes to the D-dopa binding site. Gly-312 lines the D-proline pocket. Residue Gly-312 participates in D-serine binding. Position 312 (Gly-312) interacts with D-dopa. Residues 344–346 (SKL) carry the Microbody targeting signal motif.

The protein belongs to the DAMOX/DASOX family. FAD is required as a cofactor.

It is found in the peroxisome matrix. The enzyme catalyses a D-alpha-amino acid + O2 + H2O = a 2-oxocarboxylate + H2O2 + NH4(+). It carries out the reaction D-serine + O2 + H2O = 3-hydroxypyruvate + H2O2 + NH4(+). It catalyses the reaction D-phenylalanine + O2 + H2O = 3-phenylpyruvate + H2O2 + NH4(+). The catalysed reaction is D-alanine + O2 + H2O = pyruvate + H2O2 + NH4(+). The enzyme catalyses D-arginine + O2 + H2O = 5-guanidino-2-oxopentanoate + H2O2 + NH4(+). It carries out the reaction D-methionine + O2 + H2O = 4-methylsulfanyl-2-oxobutanoate + H2O2 + NH4(+). It catalyses the reaction D-ornithine + O2 + H2O = 5-amino-2-oxopentanoate + H2O2 + NH4(+). The catalysed reaction is D-leucine + O2 + H2O = 4-methyl-2-oxopentanoate + H2O2 + NH4(+). The enzyme catalyses D-lysine + O2 + H2O = 6-amino-2-oxohexanoate + H2O2 + NH4(+). It carries out the reaction D-proline + O2 = 1-pyrroline-2-carboxylate + H2O2. It catalyses the reaction D-valine + O2 + H2O = 3-methyl-2-oxobutanoate + H2O2 + NH4(+). The catalysed reaction is D-histidine + O2 + H2O = 3-(imidazol-5-yl)pyruvate + H2O2 + NH4(+). In terms of biological role, catalyzes the oxidative deamination of D-amino acids with broad substrate specificity. Has low in vitro and no in vivo activity on D-serine; primary D-serine degradation is performed by the D-serine dehydratase dsd. This is D-amino-acid oxidase (ddo-1) from Dictyostelium discoideum (Social amoeba).